The following is a 344-amino-acid chain: Dihydroorotase (344 aa).

Residues His-13 and His-15 each contribute to the Zn(2+) site. Substrate is bound by residues 15 to 17 and Asn-41; that span reads HLR. Residues Lys-99, His-136, and His-174 each contribute to the Zn(2+) site. Position 99 is an N6-carboxylysine (Lys-99). Substrate is bound at residue His-136. Leu-219 is a binding site for substrate. Asp-247 provides a ligand contact to Zn(2+). The active site involves Asp-247. Substrate contacts are provided by His-251 and Ala-263.

This sequence belongs to the metallo-dependent hydrolases superfamily. DHOase family. Class II DHOase subfamily. Homodimer. Zn(2+) serves as cofactor.

It carries out the reaction (S)-dihydroorotate + H2O = N-carbamoyl-L-aspartate + H(+). It functions in the pathway pyrimidine metabolism; UMP biosynthesis via de novo pathway; (S)-dihydroorotate from bicarbonate: step 3/3. Catalyzes the reversible cyclization of carbamoyl aspartate to dihydroorotate. The polypeptide is Dihydroorotase (Acinetobacter baylyi (strain ATCC 33305 / BD413 / ADP1)).